The chain runs to 351 residues: L-threonine 3-dehydrogenase (351 aa).

C39 contributes to the Zn(2+) binding site. Residues T41 and H44 each act as charge relay system in the active site. Zn(2+) contacts are provided by H64, E65, C94, C97, C100, and C108. NAD(+) is bound by residues I176, D196, R201, 271–273, and 295–296; these read LGI and IY.

It belongs to the zinc-containing alcohol dehydrogenase family. In terms of assembly, homotetramer. It depends on Zn(2+) as a cofactor.

It is found in the cytoplasm. It carries out the reaction L-threonine + NAD(+) = (2S)-2-amino-3-oxobutanoate + NADH + H(+). Its pathway is amino-acid degradation; L-threonine degradation via oxydo-reductase pathway; glycine from L-threonine: step 1/2. Catalyzes the NAD(+)-dependent oxidation of L-threonine to 2-amino-3-ketobutyrate. This Francisella tularensis subsp. novicida (strain U112) protein is L-threonine 3-dehydrogenase.